We begin with the raw amino-acid sequence, 311 residues long: Ribosomal protein L11 methyltransferase (311 aa).

4 residues coordinate S-adenosyl-L-methionine: Thr160, Gly181, Asp203, and Asn246.

The protein belongs to the methyltransferase superfamily. PrmA family.

The protein resides in the cytoplasm. It catalyses the reaction L-lysyl-[protein] + 3 S-adenosyl-L-methionine = N(6),N(6),N(6)-trimethyl-L-lysyl-[protein] + 3 S-adenosyl-L-homocysteine + 3 H(+). Functionally, methylates ribosomal protein L11. The sequence is that of Ribosomal protein L11 methyltransferase from Macrococcus caseolyticus (strain JCSC5402) (Macrococcoides caseolyticum).